A 226-amino-acid chain; its full sequence is UPF0173 metal-dependent hydrolase Minf_0129 (226 aa).

Belongs to the UPF0173 family.

The chain is UPF0173 metal-dependent hydrolase Minf_0129 from Methylacidiphilum infernorum (isolate V4) (Methylokorus infernorum (strain V4)).